A 227-amino-acid polypeptide reads, in one-letter code: UPF0758 protein lpl2409 (227 aa).

The MPN domain occupies 102–225; the sequence is RLSNTQQTYA…YSIFAENKWA (124 aa). Residues His173, His175, and Asp186 each contribute to the Zn(2+) site. The JAMM motif motif lies at 173-186; the sequence is HNHPSGLSDASQQD.

This sequence belongs to the UPF0758 family.

This Legionella pneumophila (strain Lens) protein is UPF0758 protein lpl2409.